The following is a 240-amino-acid chain: Orotidine 5'-phosphate decarboxylase (240 aa).

Substrate is bound by residues D12, K34, D62–T71, T117, R180, Q189, G209, and R210. K64 acts as the Proton donor in catalysis.

This sequence belongs to the OMP decarboxylase family. Type 1 subfamily. As to quaternary structure, homodimer.

It catalyses the reaction orotidine 5'-phosphate + H(+) = UMP + CO2. It functions in the pathway pyrimidine metabolism; UMP biosynthesis via de novo pathway; UMP from orotate: step 2/2. Its function is as follows. Catalyzes the decarboxylation of orotidine 5'-monophosphate (OMP) to uridine 5'-monophosphate (UMP). The chain is Orotidine 5'-phosphate decarboxylase from Ruegeria pomeroyi (strain ATCC 700808 / DSM 15171 / DSS-3) (Silicibacter pomeroyi).